The primary structure comprises 109 residues: Antifungal protein ginkbilobin-like protein (109 aa).

The Gnk2-homologous domain occupies Thr4–Phe109. Intrachain disulfides connect Cys11–Cys87, Cys63–Cys72, and Cys75–Cys100. Residue Asn12 coordinates alpha-D-mannopyranose. Residues Arg94 and Glu105 each contribute to the alpha-D-mannopyranose site.

Functionally, exerts antifungal activity through its carbohydrate-binding specificity. The protein is Antifungal protein ginkbilobin-like protein of Picea abies (Norway spruce).